A 1016-amino-acid chain; its full sequence is MGSVDGDFEGLQAADRRAEVIEWLNALLPEYCLPLDSSDDELRELLSDGTVLCHIVNALIPGVLEESWGAYASSDQHAGHVKKFLAVVADMGLPGFSVKDLEEGSMSGVVDCLLVLRESVSSGLRDGTSKAPLRKKWRVPETGEPLVPGVAQGKTSPGEDKRNGLPDPKSQQKTPIFNGRKLREIFQLKRGSYADLPAAKISEMMHSNSLDNAPTQSLLSVVNGILDESIERKKGEIPHRVVYLLRKVVQEIERRLCIQAEHIRSQNVIIKTREDKYHSKIKALEILVNGTNEENQMAINRLQIIKEEKSKIEEKRKLGEQDVARLMKEKEISENTIASLKKEMEVMTSMHEQQLQKIELTAKQMEEHLTTKIKEVESLLVQSNKKIEEVEAASLLKSQLWNKKEGIFQKYMNSQQLYVKGLRISSWSIKNEMHALEMELRDEMSNFGSGLKCLVDAAENYHKVLAENQKLFNEVQELKGNIRVYCRVRPFLPGQDKKSTTVDYIGENGELLISNPFKQGKDGHRMFKFNKVFSPFSSQAEVFSDIQPLIRSVLDGFNVCIFAYGQTGSGKTYTMSGPSTSKQDWGVNYRALNDLFDISLSRRNAFSYEVGVQMVEIYNEQVRDLLSNDIAQKRLGIWSTSQPNGLVVPDASLHPVKSTSDVLDLMEIGQANRAVGSTALNERSSRSHSILTVHVRGLDVKNGSTSRGCLHLIDLAGSERVERSEATGDRLKEAQHINKSLSALGDVIFALAQKNAHVPYRNSKLTQVLQSSLGGQAKTLMFVQINPDVESYSETISTLKFAERVSGVELGAARSNKEGKDIKELLEQVASLKDTIVRKDTEIEQLQLMKDKVKSPSFAVDINGASMPKNSNSDLRSVLSITTNQQSQLSDPQSYAEVNRDGGPTSYTDITPTCLDEADFEDNASEDGFSGGTDYSVGCAAGASVFPNSCSDRTADTSIRRISSRIARFSLTKNGQPATSRPKPKDTAPKTPNQTRVQSSQLIGGSSLRASKRWQK.

In terms of domain architecture, Calponin-homology (CH) spans 14-121 (ADRRAEVIEW…CLLVLRESVS (108 aa)). The segment at 123–176 (GLRDGTSKAPLRKKWRVPETGEPLVPGVAQGKTSPGEDKRNGLPDPKSQQKTPI) is disordered. Residues 288–354 (VNGTNEENQM…EVMTSMHEQQ (67 aa)) adopt a coiled-coil conformation. Residues 481-808 (NIRVYCRVRP…LKFAERVSGV (328 aa)) form the Kinesin motor domain. 565-572 (GQTGSGKT) provides a ligand contact to ATP. A coiled-coil region spans residues 820-852 (KDIKELLEQVASLKDTIVRKDTEIEQLQLMKDK). 2 stretches are compositionally biased toward polar residues: residues 884 to 893 (NQQSQLSDPQ) and 990 to 1004 (KTPN…QLIG). 2 disordered regions span residues 884–912 (NQQS…DITP) and 971–1016 (LTKN…RWQK).

Belongs to the TRAFAC class myosin-kinesin ATPase superfamily. Kinesin family. KIN-14 subfamily.

In Oryza sativa subsp. japonica (Rice), this protein is Kinesin-like protein KIN-14K.